A 252-amino-acid chain; its full sequence is Imidazole glycerol phosphate synthase subunit HisF (252 aa).

Active-site residues include Asp-11 and Asp-130.

It belongs to the HisA/HisF family. As to quaternary structure, heterodimer of HisH and HisF.

It is found in the cytoplasm. It catalyses the reaction 5-[(5-phospho-1-deoxy-D-ribulos-1-ylimino)methylamino]-1-(5-phospho-beta-D-ribosyl)imidazole-4-carboxamide + L-glutamine = D-erythro-1-(imidazol-4-yl)glycerol 3-phosphate + 5-amino-1-(5-phospho-beta-D-ribosyl)imidazole-4-carboxamide + L-glutamate + H(+). It functions in the pathway amino-acid biosynthesis; L-histidine biosynthesis; L-histidine from 5-phospho-alpha-D-ribose 1-diphosphate: step 5/9. In terms of biological role, IGPS catalyzes the conversion of PRFAR and glutamine to IGP, AICAR and glutamate. The HisF subunit catalyzes the cyclization activity that produces IGP and AICAR from PRFAR using the ammonia provided by the HisH subunit. The chain is Imidazole glycerol phosphate synthase subunit HisF from Dictyoglomus turgidum (strain DSM 6724 / Z-1310).